We begin with the raw amino-acid sequence, 459 residues long: Anthocyanidin 3-O-glucoside 2''-O-glucosyltransferase (459 aa).

The Proton acceptor role is filled by H20. H20 is an an anthocyanidin binding site. D117 serves as the catalytic Charge relay. UDP-alpha-D-glucose-binding residues include T138, V335, Q337, H352, W355, S357, and E360. G375 is a binding site for an anthocyanidin. D376 and Q377 together coordinate UDP-alpha-D-glucose.

This sequence belongs to the UDP-glycosyltransferase family. Mainly expressed in the petals and tubes of flower buds at around 24 hours before flower opening.

The catalysed reaction is an anthocyanidin 3-O-beta-D-glucoside + UDP-alpha-D-glucose = an anthocyanidin 3-O-sophoroside + UDP + 2 H(+). It participates in pigment biosynthesis; anthocyanin biosynthesis. Glycosyltransferase that mediates the glucosylation of anthocyanidin 3-O-glucosides to yield anthocyanidin 3-O-sophorosides. 3-O-sophoroside derivatives are required for the bright blue or red color of flowers. The protein is Anthocyanidin 3-O-glucoside 2''-O-glucosyltransferase (3GGT) of Ipomoea nil (Japanese morning glory).